The following is a 178-amino-acid chain: Photosystem I assembly protein Ycf4 (178 aa).

The next 2 membrane-spanning stretches (helical) occupy residues 19–39 (FLVAAAVSVGGVGFLLASLSS) and 61–81 (LVMGLYSIAAALLASYLWYVI).

This sequence belongs to the Ycf4 family.

The protein localises to the cellular thylakoid membrane. Seems to be required for the assembly of the photosystem I complex. The sequence is that of Photosystem I assembly protein Ycf4 from Synechococcus sp. (strain CC9902).